Consider the following 95-residue polypeptide: Putative per-hexamer repeat protein 4 (95 aa).

In Mus musculus (Mouse), this protein is Putative per-hexamer repeat protein 4 (Phxr4).